The following is a 542-amino-acid chain: Heterogeneous nuclear ribonucleoprotein L-like (542 aa).

Positions 1–71 (MSSSSSSPRE…QPEAGGSHHK (71 aa)) are disordered. Residues 18-29 (YESQAKRLKTEE) are compositionally biased toward basic and acidic residues. Residue Lys26 forms a Glycyl lysine isopeptide (Lys-Gly) (interchain with G-Cter in SUMO2) linkage. The residue at position 35 (Ser35) is a Phosphoserine. The residue at position 46 (Thr46) is a Phosphothreonine. Positions 48–58 (RGGGDGGGGGR) are enriched in gly residues. Ser59, Ser68, and Ser75 each carry phosphoserine. 3 consecutive RRM domains span residues 76-150 (PVVH…YSTS), 166-244 (NKVL…YARP), and 335-409 (SVVM…VSKQ). Lys491 participates in a covalent cross-link: Glycyl lysine isopeptide (Lys-Gly) (interchain with G-Cter in SUMO2).

Interacts with HNRNPL. In terms of tissue distribution, widely expressed. Detected in bone marrow stroma cells, skeletal muscle, heart, placenta, pancreas, kidney and lung.

RNA-binding protein that functions as a regulator of alternative splicing for multiple target mRNAs, including PTPRC/CD45 and STAT5A. Required for alternative splicing of PTPRC. This Homo sapiens (Human) protein is Heterogeneous nuclear ribonucleoprotein L-like (HNRNPLL).